The following is a 351-amino-acid chain: Photosystem II D2 protein (351 aa).

A helical membrane pass occupies residues 39 to 59; that stretch reads CAYLALGAWFTGTTFVSSWYT. Position 116 (His-116) interacts with chlorophyll a. A helical transmembrane segment spans residues 123 to 139; it reads GFCLRQFEIARLVGLRP. Positions 128 and 141 each coordinate pheophytin a. The chain crosses the membrane as a helical span at residues 151-164; sequence VFVSVFLLYPLGQA. Residue His-196 coordinates chlorophyll a. The chain crosses the membrane as a helical span at residues 206–226; that stretch reads GALLCAIHGATVENTLFEDGE. A plastoquinone-binding residues include His-213 and Phe-260. His-213 contributes to the Fe cation binding site. His-267 serves as a coordination point for Fe cation. The chain crosses the membrane as a helical span at residues 277-293; the sequence is GLWVSSIGIVGLALNLR.

The protein belongs to the reaction center PufL/M/PsbA/D family. As to quaternary structure, PSII is composed of 1 copy each of membrane proteins PsbA, PsbB, PsbC, PsbD, PsbE, PsbF, PsbH, PsbI, PsbJ, PsbK, PsbL, PsbM, PsbT, PsbY, PsbZ, Psb30/Ycf12, at least 3 peripheral proteins of the oxygen-evolving complex and a large number of cofactors. It forms dimeric complexes. Requires The D1/D2 heterodimer binds P680, chlorophylls that are the primary electron donor of PSII, and subsequent electron acceptors. It shares a non-heme iron and each subunit binds pheophytin, quinone, additional chlorophylls, carotenoids and lipids. There is also a Cl(-1) ion associated with D1 and D2, which is required for oxygen evolution. The PSII complex binds additional chlorophylls, carotenoids and specific lipids. as cofactor.

Its subcellular location is the plastid. The protein resides in the chloroplast thylakoid membrane. It catalyses the reaction 2 a plastoquinone + 4 hnu + 2 H2O = 2 a plastoquinol + O2. Its function is as follows. Photosystem II (PSII) is a light-driven water:plastoquinone oxidoreductase that uses light energy to abstract electrons from H(2)O, generating O(2) and a proton gradient subsequently used for ATP formation. It consists of a core antenna complex that captures photons, and an electron transfer chain that converts photonic excitation into a charge separation. The D1/D2 (PsbA/PsbD) reaction center heterodimer binds P680, the primary electron donor of PSII as well as several subsequent electron acceptors. D2 is needed for assembly of a stable PSII complex. The sequence is that of Photosystem II D2 protein from Cyanidium caldarium (Red alga).